The following is a 401-amino-acid chain: O-methyltransferase mfmE (401 aa).

S-adenosyl-L-methionine is bound by residues 243–244 and D268; that span reads GG. Catalysis depends on H308, which acts as the Proton acceptor.

It belongs to the class I-like SAM-binding methyltransferase superfamily. Cation-independent O-methyltransferase family. COMT subfamily.

It participates in secondary metabolite biosynthesis; terpenoid biosynthesis. O-methyltransferase; part of the gene cluster that mediates the biosynthesis of the phthalide-terpenoid hybrid 11'-O-desmethylfendlerol. Within the pathway, mfmE catalyzes the 7-O-methylation of the phthalide 5,7-dihydroxy-4-(hydroxymethyl)-6-methylphthalide to yield 5-hydroxy-4-(hydroxymethyl)-7-methoxy-6-methylphthalide. The biosynthesis of 11'-O-desmethylfendlerol begins with the NR-PKS mfmB that forms 3,5-dimethylorsellinic acid (DMOA), which is then transformed into the phthalide 5,7-dihydroxy-4-(hydroxymethyl)-6-methylphthalide by the cytochrome P450 monooxygenase mfmA and the hydrolase mfmC. Subsequently, the methyltransferase mfmE catalyzes 7-O-methylation to yield 5-hydroxy-4-(hydroxymethyl)-7-methoxy-6-methylphthalide, which undergoes C-3 hydroxylation by the cytochrome P450 monooxygenase mfmF. The resultant cyclopolic acid (2,5-dihydroxy-4-(hydroxymethyl)-7-methoxy-6-methylphthalide) is then farnesylated by the DMATS-type prenyltransferase mfmD to afford 5-O-farnesylcyclopolic acid. Finally, the Pyr4-family terpene cyclase mfmH cyclizes the farnesyl moiety of 5-O-farnesylcyclopolic acid into a drimane-like structure, thus completing the biosynthesis of 11'-O-desmethylfendlerol. This Annulohypoxylon moriforme (Filamentous fungus) protein is O-methyltransferase mfmE.